The sequence spans 428 residues: Enolase (428 aa).

Glutamine 163 serves as a coordination point for (2R)-2-phosphoglycerate. Residue glutamate 205 is the Proton donor of the active site. Mg(2+)-binding residues include aspartate 242, glutamate 286, and aspartate 313. Residues lysine 338, arginine 367, serine 368, and lysine 389 each coordinate (2R)-2-phosphoglycerate. Residue lysine 338 is the Proton acceptor of the active site.

The protein belongs to the enolase family. The cofactor is Mg(2+).

It is found in the cytoplasm. The protein localises to the secreted. Its subcellular location is the cell surface. It catalyses the reaction (2R)-2-phosphoglycerate = phosphoenolpyruvate + H2O. Its pathway is carbohydrate degradation; glycolysis; pyruvate from D-glyceraldehyde 3-phosphate: step 4/5. Its function is as follows. Catalyzes the reversible conversion of 2-phosphoglycerate (2-PG) into phosphoenolpyruvate (PEP). It is essential for the degradation of carbohydrates via glycolysis. The chain is Enolase from Acidovorax sp. (strain JS42).